Reading from the N-terminus, the 161-residue chain is Suppressor of kinetochore protein 1 (161 aa).

The tract at residues 102–161 (VLASNYLDIKPLLDTGCKTVANMIRGKSPEDIRKTFNIPNDFTPEEEEQIRKENEWAEDR) is interaction with the F-box domain of F-box proteins.

The protein belongs to the SKP1 family. As to quaternary structure, essential component of the E3 ubiquitin ligase Skp1-Cullin-1-F-box (SCF) complex. Interacts with cul1, fbh1, mcs2, pip1, pof1, pof2, pof3, pof4, pof5, pof6, pof7, pof8, pof9, pof10, pof11, pof12, pof13, pof14, pop1, pop2 and tfb3. Forms a complex with pof6 and sip1. Component of the RAVE complex composed of rav1, rav2 and skp1.

Its subcellular location is the cytoplasm. The protein resides in the nucleus. In terms of biological role, required for cig2 degradation in the G2 and M phases of the cell cycle. Together with pof6, essential for septum processing and cell separation. Involved in mitotic progression, essential for the execution of anaphase B; required for coordinated structural alterations of mitotic spindles and segregation of nuclear membrane structures at anaphase. Involved in the DNA damage checkpoint pathway and maintenance of genome integrity. Component of the RAVE complex which is required for stable assembly of the vacuolar ATPase complex V-ATPase. The chain is Suppressor of kinetochore protein 1 from Schizosaccharomyces pombe (strain 972 / ATCC 24843) (Fission yeast).